Consider the following 76-residue polypeptide: uncharacterized protein (76 aa).

This is an uncharacterized protein from Ornithodoros (relapsing fever ticks).